The following is a 316-amino-acid chain: Taste receptor type 2 member 3 (316 aa).

Over 1–6 the chain is Extracellular; it reads MMGLTE. The helical transmembrane segment at 7-27 threads the bilayer; that stretch reads GVFLILSGTQFTLGILVNCFI. Over 28–42 the chain is Cytoplasmic; that stretch reads ELVNGSSWFKTKRMS. The chain crosses the membrane as a helical span at residues 43–63; it reads LSDFIITTLALLRIILLCIIL. Over 64–94 the chain is Extracellular; the sequence is TDSFLIEFSPNTHDSGIIMQIIDVSWTFTNH. The chain crosses the membrane as a helical span at residues 95–115; that stretch reads LSIWLATCLGVLYCLKIASFS. The Cytoplasmic portion of the chain corresponds to 116–128; sequence HPTFLWLKWRVSR. Residues 129-149 traverse the membrane as a helical segment; sequence VMVWMLLGALLLSCGSTASLI. The Extracellular segment spans residues 150–186; it reads NEFKLYSVFRGIEATRNVTEHFRKKRSEYYLIHVLGT. Asparagine 166 is a glycosylation site (N-linked (GlcNAc...) asparagine). Residues 187-207 traverse the membrane as a helical segment; sequence LWYLPPLIVSLASYSLLIFSL. Over 208-234 the chain is Cytoplasmic; that stretch reads GRHTRQMLQNGTSSRDPTTEAHKRAIR. A helical membrane pass occupies residues 235–255; sequence IILSFFFLFLLYFLAFLIASF. Residues 256–266 lie on the Extracellular side of the membrane; that stretch reads GNFLPKTKMAK. A helical membrane pass occupies residues 267–287; the sequence is MIGEVMTMFYPAGHSFILILG. Residues 288 to 316 are Cytoplasmic-facing; sequence NSKLKQTFVVMLRCESGHLKPGSKGPIFS.

This sequence belongs to the G-protein coupled receptor T2R family. Expressed in subsets of taste receptor cells of the tongue and palate epithelium and exclusively in gustducin-positive cells. Expressed in the antrum and fundus (part of the stomach), duodenum and in gastric endocrine cells.

The protein resides in the membrane. Gustducin-coupled receptor implicated in the perception of bitter compounds in the oral cavity and the gastrointestinal tract. Signals through PLCB2 and the calcium-regulated cation channel TRPM5. The protein is Taste receptor type 2 member 3 (TAS2R3) of Homo sapiens (Human).